Consider the following 113-residue polypeptide: Hydrogenase maturation factor HypA (113 aa).

Position 2 (histidine 2) interacts with Ni(2+). The Zn(2+) site is built by cysteine 73, cysteine 76, cysteine 89, and cysteine 92.

The protein belongs to the HypA/HybF family.

Involved in the maturation of [NiFe] hydrogenases. Required for nickel insertion into the metal center of the hydrogenase. In Chlorobaculum parvum (strain DSM 263 / NCIMB 8327) (Chlorobium vibrioforme subsp. thiosulfatophilum), this protein is Hydrogenase maturation factor HypA.